The following is a 426-amino-acid chain: Putative F-box protein At4g38870 (426 aa).

Positions 47–92 (SVNSELLPVDLIMEILKKLSLKPLIRFLCVSKLWASIIRDPYFMKL) constitute an F-box domain.

The protein is Putative F-box protein At4g38870 of Arabidopsis thaliana (Mouse-ear cress).